A 433-amino-acid polypeptide reads, in one-letter code: Inorganic triphosphatase (433 aa).

The region spanning 2 to 202 (AQEIELKFIV…ARGYHLAQGN (201 aa)) is the CYTH domain. A CHAD domain is found at 218–433 (KADVEQGLEA…EPFWLHSGKR (216 aa)).

The enzyme catalyses triphosphate + H2O = phosphate + diphosphate. With respect to regulation, inhibited by calcium ion and activated by magnesium ion. In terms of biological role, involved in the hydrolysis of the beta-gamma-phosphoanhydride linkage of triphosphate-containing substrates (inorganic or nucleoside-linked). Catalyzes the hydrolysis of inorganic triphosphate (PPPi), which could be cytotoxic because of its high affinity for calcium ion, thereby interfering with calcium signaling. It also hydrolyzes slowly thiamine triphosphate (ThTP). YgiF is a specific PPPase, but it contributes only marginally to the total PPPase activity in E.coli, where the main enzyme responsible for hydrolysis of PPPi is inorganic pyrophosphatase (PPase). The sequence is that of Inorganic triphosphatase (ygiF) from Escherichia coli (strain K12).